A 359-amino-acid chain; its full sequence is DNA replication and repair protein RecF (359 aa).

ATP is bound at residue 30–37 (GPNGSGKT).

Belongs to the RecF family.

It localises to the cytoplasm. In terms of biological role, the RecF protein is involved in DNA metabolism; it is required for DNA replication and normal SOS inducibility. RecF binds preferentially to single-stranded, linear DNA. It also seems to bind ATP. The protein is DNA replication and repair protein RecF of Vibrio vulnificus (strain CMCP6).